We begin with the raw amino-acid sequence, 345 residues long: Uroporphyrinogen decarboxylase (345 aa).

Residues 27 to 31, F46, D76, Y152, S207, and H321 each bind substrate; that span reads RQAGR.

This sequence belongs to the uroporphyrinogen decarboxylase family. In terms of assembly, homodimer.

It is found in the cytoplasm. It carries out the reaction uroporphyrinogen III + 4 H(+) = coproporphyrinogen III + 4 CO2. It functions in the pathway porphyrin-containing compound metabolism; protoporphyrin-IX biosynthesis; coproporphyrinogen-III from 5-aminolevulinate: step 4/4. Its function is as follows. Catalyzes the decarboxylation of four acetate groups of uroporphyrinogen-III to yield coproporphyrinogen-III. The chain is Uroporphyrinogen decarboxylase from Staphylococcus aureus (strain USA300 / TCH1516).